A 312-amino-acid chain; its full sequence is Retinol dehydrogenase 8 (312 aa).

An NADP(+)-binding site is contributed by 9-18; the sequence is LISGCSSGIG. The next 3 membrane-spanning stretches (helical) occupy residues 87-107, 138-158, and 170-190; these read VLVN…SLAA, IVVV…VYAA, and LAVQ…GPVV. Ser143 provides a ligand contact to substrate. Tyr156 (proton acceptor) is an active-site residue.

This sequence belongs to the short-chain dehydrogenases/reductases (SDR) family. As to expression, detected in photoreceptor outer segments in the retina (at protein level).

The protein localises to the membrane. It carries out the reaction all-trans-retinol + NADP(+) = all-trans-retinal + NADPH + H(+). Retinol dehydrogenase with a clear preference for NADP. Converts all-trans-retinal to all-trans-retinol. May play a role in the regeneration of visual pigment at high light intensity. The chain is Retinol dehydrogenase 8 (RDH8) from Bos taurus (Bovine).